Consider the following 78-residue polypeptide: D-alanyl carrier protein (78 aa).

A Carrier domain is found at 1 to 78 (MEFKQEVLDV…NIVNKLTELK (78 aa)). An O-(pantetheine 4'-phosphoryl)serine modification is found at Ser-36.

Belongs to the DltC family. Post-translationally, 4'-phosphopantetheine is transferred from CoA to a specific serine of apo-DCP.

It localises to the cytoplasm. The protein operates within cell wall biogenesis; lipoteichoic acid biosynthesis. Functionally, carrier protein involved in the D-alanylation of lipoteichoic acid (LTA). The loading of thioester-linked D-alanine onto DltC is catalyzed by D-alanine--D-alanyl carrier protein ligase DltA. The DltC-carried D-alanyl group is further transferred to cell membrane phosphatidylglycerol (PG) by forming an ester bond, probably catalyzed by DltD. D-alanylation of LTA plays an important role in modulating the properties of the cell wall in Gram-positive bacteria, influencing the net charge of the cell wall. The chain is D-alanyl carrier protein from Bacillus velezensis (strain DSM 23117 / BGSC 10A6 / LMG 26770 / FZB42) (Bacillus amyloliquefaciens subsp. plantarum).